The sequence spans 463 residues: EPD1-interacting receptor-like cytoplasmic serine/threonine-protein kinase (463 aa).

One can recognise a Protein kinase domain in the interval 91–383 (FSSANFLGKG…LTDIPIGPFV (293 aa)). Residues 97 to 105 (LGKGGFGPV) and K126 contribute to the ATP site. 2 positions are modified to phosphotyrosine: Y171 and Y173. Catalysis depends on D221, which acts as the Proton acceptor.

This sequence belongs to the protein kinase superfamily. Ser/Thr protein kinase family. As to quaternary structure, interacts with the V.dahliae elicitor EPD1 (AC G2WWH6). Phosphorylated at Tyr-171 and Tyr-173 in the presence of pathogen-associated molecular patterns (PAMPs); this triggers the expression of pathogenesis-related genes.

The protein resides in the cell membrane. The enzyme catalyses L-seryl-[protein] + ATP = O-phospho-L-seryl-[protein] + ADP + H(+). The catalysed reaction is L-threonyl-[protein] + ATP = O-phospho-L-threonyl-[protein] + ADP + H(+). Its function is as follows. Required for pathogen-associated molecular pattern (PAMP, e.g. chitin and flg22)-triggered immunity (PTI) involving reactive oxygen species (ROS) accumulation and triggering plant defense, including defense-related gene expression (e.g. PR1 and LOX). Ensures specific recognition of the EPD1 effector of Verticillium dahliae, resulting in a hypersensitive response known as effector-triggered immunity (ETI), characterized by the activation of programmed cell death to limit infection by the pathogen. Priming plants with the incompatible pathogen V.dahliae leads to an increased resistance to both the broad-host-range filamentous pathogen Botrytis cinerea and the semibiotrophic pathogen Phytophthora capsici, as a result of systemic acquired resistance (SAR). The protein is EPD1-interacting receptor-like cytoplasmic serine/threonine-protein kinase of Nicotiana benthamiana.